Reading from the N-terminus, the 213-residue chain is Pyrrolidone-carboxylate peptidase (213 aa).

Catalysis depends on residues E78, C141, and H165.

Belongs to the peptidase C15 family. In terms of assembly, homotetramer.

It is found in the cytoplasm. It catalyses the reaction Release of an N-terminal pyroglutamyl group from a polypeptide, the second amino acid generally not being Pro.. Its function is as follows. Removes 5-oxoproline from various penultimate amino acid residues except L-proline. The chain is Pyrrolidone-carboxylate peptidase from Staphylococcus saprophyticus subsp. saprophyticus (strain ATCC 15305 / DSM 20229 / NCIMB 8711 / NCTC 7292 / S-41).